The primary structure comprises 237 residues: DNA repair protein RecO (237 aa).

Belongs to the RecO family.

Involved in DNA repair and RecF pathway recombination. This Flavobacterium johnsoniae (strain ATCC 17061 / DSM 2064 / JCM 8514 / BCRC 14874 / CCUG 350202 / NBRC 14942 / NCIMB 11054 / UW101) (Cytophaga johnsonae) protein is DNA repair protein RecO.